Here is a 61-residue protein sequence, read N- to C-terminus: MDPNCSCATGVSCTCADSCKCKECKCTSCKKSCCSCCPVGCAKCAQGCVCKGASEKCNCCA.

Residue Met1 is modified to N-acetylmethionine. The beta stretch occupies residues 1–29 (MDPNCSCATGVSCTCADSCKCKECKCTSC). The a divalent metal cation site is built by Cys5, Cys7, Cys13, Cys15, Cys19, Cys21, Cys24, Cys26, Cys29, Cys33, Cys34, Cys36, Cys37, Cys41, Cys44, Cys48, Cys50, Cys57, Cys59, and Cys60. An alpha region spans residues 30–61 (KKSCCSCCPVGCAKCAQGCVCKGASEKCNCCA).

It belongs to the metallothionein superfamily. Type 1 family.

Functionally, metallothioneins have a high content of cysteine residues that bind various heavy metals; these proteins are transcriptionally regulated by both heavy metals and glucocorticoids. This Chlorocebus aethiops (Green monkey) protein is Metallothionein-1 (MT1).